The chain runs to 197 residues: uncharacterized protein (197 aa).

Residues Gln-168 to Gly-185 show a composition bias toward basic and acidic residues. Residues Gln-168–Asn-197 form a disordered region.

This is an uncharacterized protein from Escherichia coli (strain K12).